A 25-amino-acid chain; its full sequence is Ocellatin-F1 (25 aa).

Leu-25 is subject to Leucine amide.

Belongs to the frog skin active peptide (FSAP) family. Ocellatin subfamily. In terms of tissue distribution, expressed by the skin glands.

It is found in the secreted. Antibacterial peptide that inhibits reference strains of both Gram-negative bacteria (E.coli, P.aeruginosa, E.cloacae, K.pneumoniae, and A.actinomycetemcomitans) and Gram-positive bacteria (S.aureus) with relatively low potencies (MIC=25-400 uM). Shows antifungal activity against C.lusitaniae (MIC=50.25 uM), but no activity against C.albicans. In the presence of an alkaloid (bufotenine), inhibits cellular infection by the rabies virus. The peptide shows very low hemolytic activity against rabbit erythrocytes. The low amphipathicity of alpha-helices demonstrated by wheel projection as well as the low cationicity may explain the low antibacterial and hemolytic potencies. In Leptodactylus labyrinthicus (Labyrinth frog), this protein is Ocellatin-F1.